Here is a 426-residue protein sequence, read N- to C-terminus: Glutamate-1-semialdehyde 2,1-aminomutase (426 aa).

Lys-265 is subject to N6-(pyridoxal phosphate)lysine.

It belongs to the class-III pyridoxal-phosphate-dependent aminotransferase family. HemL subfamily. As to quaternary structure, homodimer. Pyridoxal 5'-phosphate serves as cofactor.

The protein resides in the cytoplasm. It catalyses the reaction (S)-4-amino-5-oxopentanoate = 5-aminolevulinate. It participates in porphyrin-containing compound metabolism; protoporphyrin-IX biosynthesis; 5-aminolevulinate from L-glutamyl-tRNA(Glu): step 2/2. The chain is Glutamate-1-semialdehyde 2,1-aminomutase from Halorhodospira halophila (strain DSM 244 / SL1) (Ectothiorhodospira halophila (strain DSM 244 / SL1)).